Consider the following 331-residue polypeptide: Cathepsin S (331 aa).

Residues 1–16 (MNWLVWALLLCSSAMA) form the signal peptide. Residues 17–114 (HVHRDPTLDH…VTYKSDPNQK (98 aa)) constitute a propeptide, activation peptide. The N-linked (GlcNAc...) asparagine glycan is linked to asparagine 104. 4 disulfides stabilise this stretch: cysteine 126–cysteine 224, cysteine 136–cysteine 180, cysteine 170–cysteine 213, and cysteine 272–cysteine 320. Residue cysteine 139 is part of the active site. Active-site residues include histidine 278 and asparagine 298.

The protein belongs to the peptidase C1 family. As to quaternary structure, monomer.

It is found in the lysosome. The protein resides in the secreted. The protein localises to the cytoplasmic vesicle. It localises to the phagosome. It catalyses the reaction Similar to cathepsin L, but with much less activity on Z-Phe-Arg-|-NHMec, and more activity on the Z-Val-Val-Arg-|-Xaa compound.. In terms of biological role, thiol protease. Key protease responsible for the removal of the invariant chain from MHC class II molecules and MHC class II antigen presentation. The bond-specificity of this proteinase is in part similar to the specificities of cathepsin L. The sequence is that of Cathepsin S (CTSS) from Bos taurus (Bovine).